A 574-amino-acid polypeptide reads, in one-letter code: uncharacterized protein (574 aa).

The interval 297–317 (SAASKPRKRKKDEVSGAQVNS) is disordered.

This is an uncharacterized protein from Mus musculus (Mouse).